The primary structure comprises 335 residues: Glycerol-3-phosphate dehydrogenase [NAD(P)+] (335 aa).

NADPH contacts are provided by serine 12, tryptophan 13, and lysine 107. Residues lysine 107, glycine 138, and serine 140 each contribute to the sn-glycerol 3-phosphate site. Residue alanine 142 participates in NADPH binding. The sn-glycerol 3-phosphate site is built by lysine 193, aspartate 246, serine 256, arginine 257, and asparagine 258. The Proton acceptor role is filled by lysine 193. Arginine 257 is an NADPH binding site. The NADPH site is built by valine 281 and glutamate 283.

The protein belongs to the NAD-dependent glycerol-3-phosphate dehydrogenase family.

Its subcellular location is the cytoplasm. The catalysed reaction is sn-glycerol 3-phosphate + NAD(+) = dihydroxyacetone phosphate + NADH + H(+). It carries out the reaction sn-glycerol 3-phosphate + NADP(+) = dihydroxyacetone phosphate + NADPH + H(+). Its pathway is membrane lipid metabolism; glycerophospholipid metabolism. In terms of biological role, catalyzes the reduction of the glycolytic intermediate dihydroxyacetone phosphate (DHAP) to sn-glycerol 3-phosphate (G3P), the key precursor for phospholipid synthesis. The protein is Glycerol-3-phosphate dehydrogenase [NAD(P)+] of Geobacter sulfurreducens (strain ATCC 51573 / DSM 12127 / PCA).